Consider the following 309-residue polypeptide: NADH-cytochrome b5 reductase 1 (309 aa).

A helical membrane pass occupies residues 29–49 (EFVPYAVALTAVLAGFKLFTG). One can recognise an FAD-binding FR-type domain in the interval 60–165 (TEFQEFVLKE…RGPKGAMVYT (106 aa)). FAD contacts are provided by residues 145-160 (TTLKVGDVMKVRGPKG) and 171-208 (HIGMIAGGTGITPMLQVIKAIIRNRPRNGGTDITKVDL).

This sequence belongs to the flavoprotein pyridine nucleotide cytochrome reductase family. As to quaternary structure, monomer. Component of the 2-(3-amino-3-carboxypropyl)histidine synthase complex composed of dph1, dph2, dph3 and a NADH-dependent reductase, predominantly cbr1. Requires FAD as cofactor.

It localises to the mitochondrion outer membrane. It catalyses the reaction 2 Fe(III)-[cytochrome b5] + NADH = 2 Fe(II)-[cytochrome b5] + NAD(+) + H(+). The enzyme catalyses 2 Fe(3+)-[Dph3] + NADH = 2 Fe(2+)-[Dph3] + NAD(+) + H(+). The protein operates within protein modification; peptidyl-diphthamide biosynthesis. In terms of biological role, NADH-dependent reductase for dph3 and cytochrome b5. Required for the first step of diphthamide biosynthesis, a post-translational modification of histidine which occurs in elongation factor 2. Dph1 and dph2 transfer a 3-amino-3-carboxypropyl (ACP) group from S-adenosyl-L-methionine (SAM) to a histidine residue, the reaction is assisted by a reduction system comprising dph3 and a NADH-dependent reductase, predominantly cbr1. By reducing dph3, also involved in the formation of the tRNA wobble base modification mcm5s 2U (5-methoxycarbonylmethyl-2-thiouridine), mediated by the elongator complex. The cytochrome b5/NADH cytochrome b5 reductase electron transfer system supports the catalytic activity of several sterol biosynthetic enzymes. This chain is NADH-cytochrome b5 reductase 1 (cbr1), found in Aspergillus clavatus (strain ATCC 1007 / CBS 513.65 / DSM 816 / NCTC 3887 / NRRL 1 / QM 1276 / 107).